A 416-amino-acid chain; its full sequence is CinA-like protein (416 aa).

It belongs to the CinA family.

In Synechocystis sp. (strain ATCC 27184 / PCC 6803 / Kazusa), this protein is CinA-like protein.